The following is a 2399-amino-acid chain: Protein DOP1A (2399 aa).

6 disordered regions span residues 556 to 598, 619 to 660, 1105 to 1124, 1166 to 1188, 1234 to 1263, and 1279 to 1308; these read PSGQ…SSES, NGQG…GAAG, SDSG…EVDP, SVTS…PGKE, SPCI…HSSI, and ETIV…KKKA. 2 stretches are compositionally biased toward low complexity: residues 629-647 and 1105-1116; these read GSTS…EETV and SDSGCSQSSAGD. Composition is skewed to polar residues over residues 1166-1180 and 1234-1252; these read SVTS…QTKS and SPCI…VPSE. The residue at position 1261 (S1261) is a Phosphoserine.

The protein belongs to the DOP1 family.

The protein localises to the golgi apparatus membrane. Its function is as follows. May be involved in protein traffic between late Golgi and early endosomes. The polypeptide is Protein DOP1A (Dop1a) (Mus musculus (Mouse)).